Here is a 379-residue protein sequence, read N- to C-terminus: Chaperone protein DnaJ (379 aa).

The region spanning 4–69 (DLYETLGVKK…QKRAAYDRYG (66 aa)) is the J domain. Residues 137-215 (GKTAQIRVPT…CHGQGRVTEE (79 aa)) form a CR-type zinc finger. Cys-150, Cys-153, Cys-167, Cys-170, Cys-189, Cys-192, Cys-203, and Cys-206 together coordinate Zn(2+). CXXCXGXG motif repeat units follow at residues 150–157 (CDVCTGSG), 167–174 (CATCQGSG), 189–196 (CPTCGGRG), and 203–210 (CTKCHGQG).

It belongs to the DnaJ family. Homodimer. The cofactor is Zn(2+).

It is found in the cytoplasm. Participates actively in the response to hyperosmotic and heat shock by preventing the aggregation of stress-denatured proteins and by disaggregating proteins, also in an autonomous, DnaK-independent fashion. Unfolded proteins bind initially to DnaJ; upon interaction with the DnaJ-bound protein, DnaK hydrolyzes its bound ATP, resulting in the formation of a stable complex. GrpE releases ADP from DnaK; ATP binding to DnaK triggers the release of the substrate protein, thus completing the reaction cycle. Several rounds of ATP-dependent interactions between DnaJ, DnaK and GrpE are required for fully efficient folding. Also involved, together with DnaK and GrpE, in the DNA replication of plasmids through activation of initiation proteins. In Sinorhizobium fredii (strain NBRC 101917 / NGR234), this protein is Chaperone protein DnaJ.